The primary structure comprises 749 residues: MEHTYQYAWIIPFLPLPIPMLLGVGLLLFPTATKNLRRMWSFTSVLLLSIVMTFSVNLSIHQINSSSIYQYVWSWTINNDFSLEFGYLIDPLTSIMSILITTVGIMVLIYSDNYMSHDQGYLRFFAYMSFFNASMLGLVTSSNLIQIYIFWELVGMCSYLLIGFWFTRPIAANACQKAFVTNRVGDFGLLLGILGLYWITGSFEFRDLFEIFNNLIYNYNNGTNFLFVSLCALFLFVGAVAKSAQFPLHVWLPDAMEGPTPISALIHAATMVAAGIFLVARLFPLFIVIPYIMNLISLIGIITILLGATLALAQKDIKKSLAYSTMSQLGYTMLALGMGSYRAALFHLITHAYSKALLFLGSGSIIHSMEAIVGYSPDKSQNMVLMGGLTKHVPITKNTFLLGTLSLCGIPPLACFWSKDEILNDSWLYSPIFAIIACLTAGLTAFYMFRIYLLTFEGYFNVHCKNYSGKKSSLFYSISLWGKEGQKTIKKKIRLLTLLTTNNNENEKASFFSKKVYRLDSNVRKMTRPFITINQFDNKNTFLYPQESDNTMLFPLFALALFTLFVGAIGIPFNQERMDFDILSKWLNPATNLLHKNLNNYGDWYEFVINAIFSVSISYFGIFLASLLYNPVYSSLQNLDLINSVAKKVPKRIFWDKIINKVYNWSYNRGYIDAFYETSLTKGIRGLAELTHFFDGRVIDGITNGVGVTSFFVGESIKYVGGGRISSYLFLYLSSVSILLLISYFFLNQ.

The next 16 membrane-spanning stretches (helical) occupy residues 9 to 29 (WIIP…LLLF), 40 to 60 (WSFT…NLSI), 89 to 109 (IDPL…MVLI), 125 to 145 (FAYM…SNLI), 147 to 167 (IYIF…FWFT), 185 to 205 (GDFG…SFEF), 221 to 241 (NGTN…GAVA), 260 to 280 (TPIS…FLVA), 285 to 305 (LFIV…ITIL), 329 to 349 (LGYT…FHLI), 356 to 376 (ALLF…VGYS), 398 to 418 (NTFL…CFWS), 427 to 447 (WLYS…TAFY), 553 to 573 (LFPL…GIPF), 607 to 627 (FVIN…LASL), and 727 to 747 (SYLF…YFFL).

Belongs to the complex I subunit 5 family. NDH is composed of at least 16 different subunits, 5 of which are encoded in the nucleus.

It localises to the plastid. Its subcellular location is the chloroplast thylakoid membrane. It catalyses the reaction a plastoquinone + NADH + (n+1) H(+)(in) = a plastoquinol + NAD(+) + n H(+)(out). The enzyme catalyses a plastoquinone + NADPH + (n+1) H(+)(in) = a plastoquinol + NADP(+) + n H(+)(out). Functionally, NDH shuttles electrons from NAD(P)H:plastoquinone, via FMN and iron-sulfur (Fe-S) centers, to quinones in the photosynthetic chain and possibly in a chloroplast respiratory chain. The immediate electron acceptor for the enzyme in this species is believed to be plastoquinone. Couples the redox reaction to proton translocation, and thus conserves the redox energy in a proton gradient. This chain is NAD(P)H-quinone oxidoreductase subunit 5, chloroplastic (ndhF), found in Vitis vinifera (Grape).